A 356-amino-acid chain; its full sequence is uncharacterized protein (356 aa).

The next 6 helical transmembrane spans lie at 2-22 (IESIIYNVAVMVAGIYLFHRL), 35-55 (GYVTVLMTIVALLLAAYPIPF), 76-96 (NMGYTLVSAVIVALVEVFAFG), 99-119 (LLYGVVLIVIGIIVSMVGPFL), 124-144 (IVALVILNLISVIILLILSIF), and 152-172 (EIAFLVPISFVLTIASAITFV). Residues 218–353 (ESLALLLIDI…GRNQVMFNPI (136 aa)) form the GGDEF domain.

The protein localises to the cell membrane. This is an uncharacterized protein from Staphylococcus haemolyticus (strain JCSC1435).